A 65-amino-acid polypeptide reads, in one-letter code: Large ribosomal subunit protein uL29 (65 aa).

It belongs to the universal ribosomal protein uL29 family.

In Borreliella burgdorferi (strain ATCC 35210 / DSM 4680 / CIP 102532 / B31) (Borrelia burgdorferi), this protein is Large ribosomal subunit protein uL29 (rpmC).